The following is an 888-amino-acid chain: Alanine--tRNA ligase (888 aa).

Zn(2+)-binding residues include His571, His575, Cys674, and His678.

This sequence belongs to the class-II aminoacyl-tRNA synthetase family. Zn(2+) is required as a cofactor.

It is found in the cytoplasm. It carries out the reaction tRNA(Ala) + L-alanine + ATP = L-alanyl-tRNA(Ala) + AMP + diphosphate. In terms of biological role, catalyzes the attachment of alanine to tRNA(Ala) in a two-step reaction: alanine is first activated by ATP to form Ala-AMP and then transferred to the acceptor end of tRNA(Ala). Also edits incorrectly charged Ser-tRNA(Ala) and Gly-tRNA(Ala) via its editing domain. The sequence is that of Alanine--tRNA ligase from Nocardia farcinica (strain IFM 10152).